The sequence spans 145 residues: Transcription antitermination protein NusB (145 aa).

The protein belongs to the NusB family.

Functionally, involved in transcription antitermination. Required for transcription of ribosomal RNA (rRNA) genes. Binds specifically to the boxA antiterminator sequence of the ribosomal RNA (rrn) operons. The protein is Transcription antitermination protein NusB of Geotalea daltonii (strain DSM 22248 / JCM 15807 / FRC-32) (Geobacter daltonii).